The sequence spans 459 residues: Ribulose bisphosphate carboxylase (459 aa).

N111 contributes to the substrate binding site. K166 functions as the Proton acceptor in the catalytic mechanism. K168 provides a ligand contact to substrate. 3 residues coordinate Mg(2+): K191, D193, and E194. The residue at position 191 (K191) is an N6-carboxylysine. The active-site Proton acceptor is the H287. Residues R288, H321, and S368 each coordinate substrate.

Belongs to the RuBisCO large chain family. Type II subfamily. Homodimer. Requires Mg(2+) as cofactor.

It carries out the reaction 2 (2R)-3-phosphoglycerate + 2 H(+) = D-ribulose 1,5-bisphosphate + CO2 + H2O. The catalysed reaction is D-ribulose 1,5-bisphosphate + O2 = 2-phosphoglycolate + (2R)-3-phosphoglycerate + 2 H(+). In terms of biological role, ruBisCO catalyzes two reactions: the carboxylation of D-ribulose 1,5-bisphosphate, the primary event in carbon dioxide fixation, as well as the oxidative fragmentation of the pentose substrate. Both reactions occur simultaneously and in competition at the same active site. The polypeptide is Ribulose bisphosphate carboxylase (Paramagnetospirillum magnetotacticum (Aquaspirillum magnetotacticum)).